Consider the following 219-residue polypeptide: Interleukin-12 subunit alpha (219 aa).

The signal sequence occupies residues 1 to 22 (MCPARSLLLVATLVLLDYLSLA). Asparagine 24 and asparagine 93 each carry an N-linked (GlcNAc...) asparagine glycan. Intrachain disulfides connect cysteine 37–cysteine 110, cysteine 64–cysteine 196, and cysteine 85–cysteine 123.

This sequence belongs to the IL-6 superfamily. Heterodimer with IL12B; disulfide-linked. This heterodimer is known as interleukin IL-12. Heterodimer with EBI3/IL27B; not disulfide-linked. This heterodimer is known as interleukin IL-35. Interacts with NBR1; this interaction promotes IL-12 secretion.

It is found in the secreted. In terms of biological role, heterodimerizes with IL12B to form the IL-12 cytokine or with EBI3/IL27B to form the IL-35 cytokine. IL-12 is primarily produced by professional antigen-presenting cells (APCs) such as B-cells and dendritic cells (DCs) as well as macrophages and granulocytes and regulates T-cell and natural killer-cell responses, induces the production of interferon-gamma (IFN-gamma), favors the differentiation of T-helper 1 (Th1) cells and is an important link between innate resistance and adaptive immunity. Mechanistically, exerts its biological effects through a receptor composed of IL12R1 and IL12R2 subunits. Binding to the receptor results in the rapid tyrosine phosphorylation of a number of cellular substrates including the JAK family kinases TYK2 and JAK2. In turn, recruited STAT4 gets phosphorylated and translocates to the nucleus where it regulates cytokine/growth factor responsive genes. As part of IL-35, plays essential roles in maintaining the immune homeostasis of the liver microenvironment and also functions as an immune-suppressive cytokine. Mediates biological events through unconventional receptors composed of IL12RB2 and gp130/IL6ST heterodimers or homodimers. Signaling requires the transcription factors STAT1 and STAT4, which form a unique heterodimer that binds to distinct DNA sites. The polypeptide is Interleukin-12 subunit alpha (IL12A) (Papio anubis (Olive baboon)).